Here is a 733-residue protein sequence, read N- to C-terminus: tRNA (guanine(27)-N(2))-dimethyltransferase (733 aa).

Positions 1-18 (MENMAEEELLPLEKEEVE) are enriched in acidic residues. Residues 1–78 (MENMAEEELL…LASAPEEAKS (78 aa)) form a disordered region. Thr-26 carries the phosphothreonine modification. Composition is skewed to low complexity over residues 39 to 49 (PDSALDSAPTP) and 57 to 73 (PALA…ASAP). Position 66 is a phosphoserine (Ser-66). The Nucleolar localization signal signature appears at 135-139 (HKLRR). A C2H2-type zinc finger spans residues 184–206 (YHCIICSATITRRTDMLGHVRRH). In terms of domain architecture, Trm1 methyltransferase spans 227-688 (EILKEADTDV…APLMQFKSIL (462 aa)). Positions 260, 307, 357, and 358 each coordinate S-adenosyl-L-methionine. 4 residues coordinate Zn(2+): Cys-488, Cys-491, Cys-513, and Cys-515. Lys-585 participates in a covalent cross-link: Glycyl lysine isopeptide (Lys-Gly) (interchain with G-Cter in SUMO2). Phosphoserine is present on residues Ser-612 and Ser-707.

It belongs to the class I-like SAM-binding methyltransferase superfamily. Trm1 family. As to expression, widely expressed.

It is found in the nucleus. Its subcellular location is the nucleolus. The catalysed reaction is guanosine(27) in tRNA(Tyr) + 2 S-adenosyl-L-methionine = N(2)-dimethylguanosine(27) in tRNA(Tyr) + 2 S-adenosyl-L-homocysteine + 2 H(+). In terms of biological role, specifically dimethylates a single guanine residue at position 27 of tRNA(Tyr) using S-adenosyl-L-methionine as donor of the methyl groups. Dimethylation at position 27 of tRNA(Tyr) is required for efficient translation of tyrosine codons. Also required to maintain 3-(3-amino-3-carboxypropyl)uridine (acp3U) in the D-loop of several cytoplasmic tRNAs. In Homo sapiens (Human), this protein is tRNA (guanine(27)-N(2))-dimethyltransferase.